A 243-amino-acid chain; its full sequence is Bidirectional sugar transporter SWEET2a (243 aa).

The Extracellular segment spans residues 1 to 23 (MDWAAPALTSFVADSSYRHLCCY). Residues 24-44 (GAGIAGNVFAFVLFISPLPTF) form a helical membrane-spanning segment. The region spanning 24–111 (GAGIAGNVFA…AVFIAFADAK (88 aa)) is the MtN3/slv 1 domain. Residues 45–57 (KRIVRNGSTEQFS) are Cytoplasmic-facing. A helical transmembrane segment spans residues 58 to 80 (AMPYIYSLLNCLICMWYGLPFVS). Topologically, residues 81–89 (YGVVLVATV) are extracellular. Residues 90-110 (NSIGAVFQLAYTAVFIAFADA) traverse the membrane as a helical segment. Topologically, residues 111–117 (KQRLKVS) are cytoplasmic. A helical transmembrane segment spans residues 118 to 138 (ALLAAVFVVFGLIVFVSLALL). The Extracellular portion of the chain corresponds to 139–145 (DHPTRQM). Residues 146–166 (FVGYLSVASLIFMFASPLSII) traverse the membrane as a helical segment. In terms of domain architecture, MtN3/slv 2 spans 147 to 230 (VGYLSVASLI…VLYAYFRKGS (84 aa)). At 167-179 (NLVIRTKSVEYMP) the chain is on the cytoplasmic side. A helical transmembrane segment spans residues 180 to 200 (FYLSLSMFLMSASFFGYGVLL). Residues 201–202 (ND) are Extracellular-facing. A helical membrane pass occupies residues 203–223 (FFIYIPNGIGTILGIIQLVLY). Over 224–243 (AYFRKGSSEEAKLPLLVTHT) the chain is Cytoplasmic.

It belongs to the SWEET sugar transporter family. As to quaternary structure, forms homooligomers and/or heterooligomers.

It is found in the cell membrane. In terms of biological role, mediates both low-affinity uptake and efflux of sugar across the plasma membrane. This Sorghum bicolor (Sorghum) protein is Bidirectional sugar transporter SWEET2a.